The chain runs to 89 residues: Small ribosomal subunit protein uS14 (89 aa).

This sequence belongs to the universal ribosomal protein uS14 family. In terms of assembly, part of the 30S ribosomal subunit. Contacts proteins S3 and S10.

Functionally, binds 16S rRNA, required for the assembly of 30S particles and may also be responsible for determining the conformation of the 16S rRNA at the A site. The chain is Small ribosomal subunit protein uS14 from Streptococcus pneumoniae serotype 2 (strain D39 / NCTC 7466).